Reading from the N-terminus, the 192-residue chain is GTP cyclohydrolase-2 (192 aa).

47–51 (RIHSE) contacts GTP. Residues cysteine 52, cysteine 63, and cysteine 65 each contribute to the Zn(2+) site. GTP contacts are provided by residues glutamine 68, 90–92 (EGR), and threonine 112. Aspartate 124 acts as the Proton acceptor in catalysis. Residue arginine 126 is the Nucleophile of the active site. Positions 147 and 152 each coordinate GTP.

Belongs to the GTP cyclohydrolase II family. It depends on Zn(2+) as a cofactor.

The enzyme catalyses GTP + 4 H2O = 2,5-diamino-6-hydroxy-4-(5-phosphoribosylamino)-pyrimidine + formate + 2 phosphate + 3 H(+). It functions in the pathway cofactor biosynthesis; riboflavin biosynthesis; 5-amino-6-(D-ribitylamino)uracil from GTP: step 1/4. In terms of biological role, catalyzes the conversion of GTP to 2,5-diamino-6-ribosylamino-4(3H)-pyrimidinone 5'-phosphate (DARP), formate and pyrophosphate. The polypeptide is GTP cyclohydrolase-2 (Picrophilus torridus (strain ATCC 700027 / DSM 9790 / JCM 10055 / NBRC 100828 / KAW 2/3)).